Reading from the N-terminus, the 62-residue chain is uncharacterized protein (62 aa).

This is an uncharacterized protein from Escherichia coli (strain K12).